Here is a 156-residue protein sequence, read N- to C-terminus: MNITVLAVGTKMPRWVDEAVAEYAKRFGRDAAYALKEIKPEKRGAGVNAVQGMAAEEKRILEAIPQGAFLVVLDERGKAPTSVELAEHLKSWRQNGEHVCFVIGGADGMTDRLKQQARMMMRLSSLTLPHGMVRVLLTEQLYRAVSILHNHPYHRE.

Residues L73, G104, and 123–128 each bind S-adenosyl-L-methionine; that span reads LSSLTL.

This sequence belongs to the RNA methyltransferase RlmH family. Homodimer.

Its subcellular location is the cytoplasm. It carries out the reaction pseudouridine(1915) in 23S rRNA + S-adenosyl-L-methionine = N(3)-methylpseudouridine(1915) in 23S rRNA + S-adenosyl-L-homocysteine + H(+). Functionally, specifically methylates the pseudouridine at position 1915 (m3Psi1915) in 23S rRNA. This is Ribosomal RNA large subunit methyltransferase H from Neisseria gonorrhoeae (strain NCCP11945).